Reading from the N-terminus, the 208-residue chain is Small ribosomal subunit protein uS4 (208 aa).

Residues 98–160 (RRLDNVVYRL…SKSKTRFVEI (63 aa)) form the S4 RNA-binding domain.

Belongs to the universal ribosomal protein uS4 family. In terms of assembly, part of the 30S ribosomal subunit. Contacts protein S5. The interaction surface between S4 and S5 is involved in control of translational fidelity.

Its function is as follows. One of the primary rRNA binding proteins, it binds directly to 16S rRNA where it nucleates assembly of the body of the 30S subunit. With S5 and S12 plays an important role in translational accuracy. The sequence is that of Small ribosomal subunit protein uS4 from Caldicellulosiruptor bescii (strain ATCC BAA-1888 / DSM 6725 / KCTC 15123 / Z-1320) (Anaerocellum thermophilum).